Reading from the N-terminus, the 346-residue chain is Phosphate acyltransferase (346 aa).

Belongs to the PlsX family. Homodimer. Probably interacts with PlsY.

It localises to the cytoplasm. It carries out the reaction a fatty acyl-[ACP] + phosphate = an acyl phosphate + holo-[ACP]. It participates in lipid metabolism; phospholipid metabolism. Functionally, catalyzes the reversible formation of acyl-phosphate (acyl-PO(4)) from acyl-[acyl-carrier-protein] (acyl-ACP). This enzyme utilizes acyl-ACP as fatty acyl donor, but not acyl-CoA. This Brucella melitensis biotype 2 (strain ATCC 23457) protein is Phosphate acyltransferase.